Reading from the N-terminus, the 585-residue chain is Formate--tetrahydrofolate ligase (585 aa).

Threonine 65–threonine 72 lines the ATP pocket.

It belongs to the formate--tetrahydrofolate ligase family.

It catalyses the reaction (6S)-5,6,7,8-tetrahydrofolate + formate + ATP = (6R)-10-formyltetrahydrofolate + ADP + phosphate. Its pathway is one-carbon metabolism; tetrahydrofolate interconversion. The chain is Formate--tetrahydrofolate ligase from Shewanella baltica (strain OS195).